The sequence spans 363 residues: Phosphoserine aminotransferase (363 aa).

Residue Arg42 coordinates L-glutamate. Pyridoxal 5'-phosphate contacts are provided by residues 76–77 (GR), Trp102, Thr156, Asp175, and Gln198. The residue at position 199 (Lys199) is an N6-(pyridoxal phosphate)lysine. 240–241 (NT) is a pyridoxal 5'-phosphate binding site.

The protein belongs to the class-V pyridoxal-phosphate-dependent aminotransferase family. SerC subfamily. As to quaternary structure, homodimer. Requires pyridoxal 5'-phosphate as cofactor.

It is found in the cytoplasm. It carries out the reaction O-phospho-L-serine + 2-oxoglutarate = 3-phosphooxypyruvate + L-glutamate. It catalyses the reaction 4-(phosphooxy)-L-threonine + 2-oxoglutarate = (R)-3-hydroxy-2-oxo-4-phosphooxybutanoate + L-glutamate. It participates in amino-acid biosynthesis; L-serine biosynthesis; L-serine from 3-phospho-D-glycerate: step 2/3. The protein operates within cofactor biosynthesis; pyridoxine 5'-phosphate biosynthesis; pyridoxine 5'-phosphate from D-erythrose 4-phosphate: step 3/5. Catalyzes the reversible conversion of 3-phosphohydroxypyruvate to phosphoserine and of 3-hydroxy-2-oxo-4-phosphonooxybutanoate to phosphohydroxythreonine. This chain is Phosphoserine aminotransferase, found in Shewanella piezotolerans (strain WP3 / JCM 13877).